A 943-amino-acid chain; its full sequence is Isoleucine--tRNA ligase (943 aa).

The 'HIGH' region signature appears at 58 to 68; that stretch reads PYANGNIHIGH. Glu567 is an L-isoleucyl-5'-AMP binding site. The 'KMSKS' region motif lies at 608 to 612; it reads KMSKS. ATP is bound at residue Lys611. Residues Cys906, Cys909, Cys926, and Cys929 each coordinate Zn(2+).

Belongs to the class-I aminoacyl-tRNA synthetase family. IleS type 1 subfamily. Monomer. The cofactor is Zn(2+).

Its subcellular location is the cytoplasm. It catalyses the reaction tRNA(Ile) + L-isoleucine + ATP = L-isoleucyl-tRNA(Ile) + AMP + diphosphate. Functionally, catalyzes the attachment of isoleucine to tRNA(Ile). As IleRS can inadvertently accommodate and process structurally similar amino acids such as valine, to avoid such errors it has two additional distinct tRNA(Ile)-dependent editing activities. One activity is designated as 'pretransfer' editing and involves the hydrolysis of activated Val-AMP. The other activity is designated 'posttransfer' editing and involves deacylation of mischarged Val-tRNA(Ile). The protein is Isoleucine--tRNA ligase of Azotobacter vinelandii (strain DJ / ATCC BAA-1303).